The sequence spans 525 residues: Allantoate deiminase (525 aa).

The N-terminal stretch at 1-53 (MAVPHPSSSSSRSHPFLSHVYHTSFHHHHHHNHPSLVLFWCLVFSLLSPLALS) is a signal peptide. Positions 56–75 (SSSSSSSSDSSSSSSSHISL) are enriched in low complexity. The interval 56 to 78 (SSSSSSSSDSSSSSSSHISLGIG) is disordered. N-linked (GlcNAc...) asparagine glycosylation is present at N156. 5 residues coordinate Mn(2+): H167, D178, E215, H281, and H499.

The protein belongs to the peptidase M20A family. In terms of assembly, homodimer. Mn(2+) is required as a cofactor. In terms of tissue distribution, expressed in seedlings, roots, stems, leaves, flowers, siliques and seeds.

It is found in the endoplasmic reticulum. It catalyses the reaction allantoate + H2O + 2 H(+) = (S)-2-ureidoglycine + NH4(+) + CO2. Inhibited by borate, fluoride, L-Asn and L-Asp, but not by phenylphosphorodiamidate. Involved in the catabolism of purine nucleotides. Can use allantoate as substrate, but not Nalpha-carbamoyl-L-Asp, Nalpha-carbamoyl-L-Ala or Nalpha-carbamoyl-Gly. The sequential activity of AAH, UGLYAH and UAH allows a complete purine breakdown without the intermediate generation of urea. Involved in the regulation of seed maturation and seed dormancy. The sequence is that of Allantoate deiminase from Arabidopsis thaliana (Mouse-ear cress).